Consider the following 130-residue polypeptide: Small ribosomal subunit protein uS8 (130 aa).

It belongs to the universal ribosomal protein uS8 family. As to quaternary structure, part of the 30S ribosomal subunit.

In terms of biological role, one of the primary rRNA binding proteins, it binds directly to 16S rRNA central domain where it helps coordinate assembly of the platform of the 30S subunit. This Pyrococcus furiosus (strain ATCC 43587 / DSM 3638 / JCM 8422 / Vc1) protein is Small ribosomal subunit protein uS8.